We begin with the raw amino-acid sequence, 381 residues long: S-adenosylmethionine synthase (381 aa).

His-15 provides a ligand contact to ATP. Asp-17 contributes to the Mg(2+) binding site. K(+) is bound at residue Glu-43. L-methionine contacts are provided by Glu-56 and Gln-99. Positions Gln-99–Asn-109 are flexible loop. Residues Asp-164 to Lys-166, Arg-230 to Phe-231, Asp-239, Arg-245 to Lys-246, and Lys-266 each bind ATP. Residue Asp-239 coordinates L-methionine. Lys-270 lines the L-methionine pocket.

Belongs to the AdoMet synthase family. In terms of assembly, homotetramer; dimer of dimers. Requires Mg(2+) as cofactor. K(+) is required as a cofactor.

It localises to the cytoplasm. The enzyme catalyses L-methionine + ATP + H2O = S-adenosyl-L-methionine + phosphate + diphosphate. The protein operates within amino-acid biosynthesis; S-adenosyl-L-methionine biosynthesis; S-adenosyl-L-methionine from L-methionine: step 1/1. Functionally, catalyzes the formation of S-adenosylmethionine (AdoMet) from methionine and ATP. The overall synthetic reaction is composed of two sequential steps, AdoMet formation and the subsequent tripolyphosphate hydrolysis which occurs prior to release of AdoMet from the enzyme. This chain is S-adenosylmethionine synthase, found in Legionella jeonii.